Consider the following 608-residue polypeptide: Aspartate--tRNA(Asp/Asn) ligase (608 aa).

An L-aspartate-binding site is contributed by Glu-179. Residues 203-206 are aspartate; sequence QLFK. Position 225 (Arg-225) interacts with L-aspartate. ATP contacts are provided by residues 225–227 and Gln-234; that span reads RDE. Position 461 (His-461) interacts with L-aspartate. ATP is bound at residue Glu-494. L-aspartate is bound at residue Arg-501. Residue 546-549 participates in ATP binding; the sequence is GLDR.

Belongs to the class-II aminoacyl-tRNA synthetase family. Type 1 subfamily. As to quaternary structure, homodimer.

The protein resides in the cytoplasm. It catalyses the reaction tRNA(Asx) + L-aspartate + ATP = L-aspartyl-tRNA(Asx) + AMP + diphosphate. Aspartyl-tRNA synthetase with relaxed tRNA specificity since it is able to aspartylate not only its cognate tRNA(Asp) but also tRNA(Asn). Reaction proceeds in two steps: L-aspartate is first activated by ATP to form Asp-AMP and then transferred to the acceptor end of tRNA(Asp/Asn). In Psychrobacter arcticus (strain DSM 17307 / VKM B-2377 / 273-4), this protein is Aspartate--tRNA(Asp/Asn) ligase.